The following is a 562-amino-acid chain: NAD-dependent malic enzyme (562 aa).

Tyr-101 (proton donor) is an active-site residue. NAD(+) is bound at residue Arg-154. Lys-172 (proton acceptor) is an active-site residue. Positions 243, 244, and 267 each coordinate a divalent metal cation. 2 residues coordinate NAD(+): Asp-267 and Asn-415.

The protein belongs to the malic enzymes family. As to quaternary structure, homotetramer. Mg(2+) is required as a cofactor. Mn(2+) serves as cofactor.

It carries out the reaction (S)-malate + NAD(+) = pyruvate + CO2 + NADH. The catalysed reaction is oxaloacetate + H(+) = pyruvate + CO2. This is NAD-dependent malic enzyme from Aliivibrio fischeri (strain ATCC 700601 / ES114) (Vibrio fischeri).